The sequence spans 226 residues: Putative N-acetylmannosamine-6-phosphate 2-epimerase (226 aa).

It belongs to the NanE family.

The enzyme catalyses an N-acyl-D-glucosamine 6-phosphate = an N-acyl-D-mannosamine 6-phosphate. The protein operates within amino-sugar metabolism; N-acetylneuraminate degradation; D-fructose 6-phosphate from N-acetylneuraminate: step 3/5. Its function is as follows. Converts N-acetylmannosamine-6-phosphate (ManNAc-6-P) to N-acetylglucosamine-6-phosphate (GlcNAc-6-P). The sequence is that of Putative N-acetylmannosamine-6-phosphate 2-epimerase from Mycoplasma capricolum subsp. capricolum (strain California kid / ATCC 27343 / NCTC 10154).